The sequence spans 287 residues: MSRPEHIAPPEIFYDDVESKKYSSNSRIIEIQTKMAERAYELLAIPETAEGLMLLDIGCGSGISGDVITDAGHYWIGCDISQHMLDVAIDREVEGDVMLRDIGQGFPFRAGSFDAAISISAIQWLCNAEKSHHNPRKRLHTFFQSLFNVLTRGGKAILQFYPENSAQIEMITASALRCGFSGGLLIDFPNSSKAKKYFLVLFTGNNNIMPSAKGVEGEEYEQQEEEDSNEVKYSNRKRDRRRVTKSKGSAQHKTKEWIMNKKDRQRKQGREIKNDSKFSGRKRGPKF.

The interval G214–F287 is disordered. Residues G217 to S228 are compositionally biased toward acidic residues. The segment covering S234–K245 has biased composition (basic residues). Basic and acidic residues predominate over residues K253 to F278.

The protein belongs to the class I-like SAM-binding methyltransferase superfamily. BUD23/WBSCR22 family.

It is found in the nucleus. Its subcellular location is the nucleoplasm. The protein resides in the cytoplasm. The protein localises to the perinuclear region. It carries out the reaction a guanosine in 18S rRNA + S-adenosyl-L-methionine = an N(7)-methylguanosine in 18S rRNA + S-adenosyl-L-homocysteine. S-adenosyl-L-methionine-dependent methyltransferase that specifically methylates the N(7) position of a guanine in 18S rRNA. Important for biogenesis end export of the 40S ribosomal subunit independent on its methyltransferase activity. Its function is as follows. S-adenosyl-L-methionine-dependent methyltransferase that specifically methylates the N(7) position of a guanine in 18S rRNA. Requires the methyltransferase adapter protein TRM112 for full rRNA methyltransferase activity. Involved in the pre-rRNA processing steps leading to small-subunit rRNA production independently of its RNA-modifying catalytic activity. Important for biogenesis end export of the 40S ribosomal subunit independent on its methyltransferase activity. This Dictyostelium discoideum (Social amoeba) protein is Probable 18S rRNA (guanine-N(7))-methyltransferase.